Here is a 1390-residue protein sequence, read N- to C-terminus: DNA-directed RNA polymerase subunit beta' (1390 aa).

Zn(2+)-binding residues include Cys70, Cys72, Cys85, and Cys88. Residues Asp460, Asp462, and Asp464 each coordinate Mg(2+). Zn(2+) contacts are provided by Cys814, Cys888, Cys895, and Cys898.

It belongs to the RNA polymerase beta' chain family. As to quaternary structure, the RNAP catalytic core consists of 2 alpha, 1 beta, 1 beta' and 1 omega subunit. When a sigma factor is associated with the core the holoenzyme is formed, which can initiate transcription. The cofactor is Mg(2+). Zn(2+) is required as a cofactor.

It carries out the reaction RNA(n) + a ribonucleoside 5'-triphosphate = RNA(n+1) + diphosphate. Its function is as follows. DNA-dependent RNA polymerase catalyzes the transcription of DNA into RNA using the four ribonucleoside triphosphates as substrates. The protein is DNA-directed RNA polymerase subunit beta' of Pseudoalteromonas translucida (strain TAC 125).